Here is a 295-residue protein sequence, read N- to C-terminus: Ornithine carbamoyltransferase, catabolic (295 aa).

Carbamoyl phosphate contacts are provided by residues 49-52 (STRT), Gln76, Arg100, and 127-130 (HPCQ). L-ornithine contacts are provided by residues Asn155, Asp213, and 217–218 (SM). Carbamoyl phosphate is bound by residues 253 to 254 (CL) and Arg281.

Belongs to the aspartate/ornithine carbamoyltransferase superfamily. OTCase family. In terms of assembly, homohexamer.

The protein resides in the cytoplasm. It catalyses the reaction carbamoyl phosphate + L-ornithine = L-citrulline + phosphate + H(+). The protein operates within amino-acid degradation; L-arginine degradation via ADI pathway; carbamoyl phosphate from L-arginine: step 2/2. With respect to regulation, arginine lead to a slight activation. Inhibited by all nucleotide phosphates. Reversibly catalyzes the transfer of the carbamoyl group from carbamoyl phosphate (CP) to the N(epsilon) atom of ornithine (ORN) to produce L-citrulline. This chain is Ornithine carbamoyltransferase, catabolic (arcB), found in Halobacterium salinarum (strain ATCC 700922 / JCM 11081 / NRC-1) (Halobacterium halobium).